Consider the following 139-residue polypeptide: Nucleoside diphosphate kinase (139 aa).

ATP-binding residues include Lys9, Phe57, Arg85, Thr91, Arg102, and Asn112. The Pros-phosphohistidine intermediate role is filled by His115.

The protein belongs to the NDK family. Homotetramer. Requires Mg(2+) as cofactor.

It localises to the cytoplasm. The enzyme catalyses a 2'-deoxyribonucleoside 5'-diphosphate + ATP = a 2'-deoxyribonucleoside 5'-triphosphate + ADP. The catalysed reaction is a ribonucleoside 5'-diphosphate + ATP = a ribonucleoside 5'-triphosphate + ADP. In terms of biological role, major role in the synthesis of nucleoside triphosphates other than ATP. The ATP gamma phosphate is transferred to the NDP beta phosphate via a ping-pong mechanism, using a phosphorylated active-site intermediate. The polypeptide is Nucleoside diphosphate kinase (Neorickettsia sennetsu (strain ATCC VR-367 / Miyayama) (Ehrlichia sennetsu)).